Consider the following 313-residue polypeptide: Cytosolic Fe-S cluster assembly factor NUBP1 homolog (313 aa).

A disordered region spans residues 1–25 (MSDVPEDANAGCPGTGSAGAGKASG). [4Fe-4S] cluster contacts are provided by Cys-12, Cys-26, Cys-29, and Cys-35. 66–73 (GKGGVGKS) lines the ATP pocket. Cys-240 and Cys-243 together coordinate [4Fe-4S] cluster.

It belongs to the Mrp/NBP35 ATP-binding proteins family. NUBP1/NBP35 subfamily. Heterotetramer of 2 NUBP1 and 2 NUBP2 chains. [4Fe-4S] cluster is required as a cofactor.

The protein localises to the cytoplasm. The protein resides in the cell projection. Component of the cytosolic iron-sulfur (Fe/S) protein assembly (CIA) machinery. Required for maturation of extramitochondrial Fe-S proteins. The NUBP1-NUBP2 heterotetramer forms a Fe-S scaffold complex, mediating the de novo assembly of an Fe-S cluster and its transfer to target apoproteins. Regulates cilium formation and structure. The sequence is that of Cytosolic Fe-S cluster assembly factor NUBP1 homolog from Caenorhabditis briggsae.